We begin with the raw amino-acid sequence, 597 residues long: MPIINGQKMACGPCIRGHRSTKCNHYNERVMVPVRKPGRPLSTCPCPPGKPCVCGGVRVAIPKKQKCHCPAGTVDSATSSEFDPSPVDTPISPASRTSSNRVTKSGSGSKSASRRQSLALANLERMDPNSINLIPSPNGNGMIGITAMVSPRDATFGHPMGMVPMGPRESFVPAPPPDFGGPMGYNMPPSMPPHMPPPHYPPHIQIPQHIKTENGGFVPMLNGTFVSPVPIPAFVDGPHPQGMQAFNGPPPPPPSNPVLEPSAMSKPKGGSGGGGCCGGGKKAPQIQAPPPVPAPLPTPPQQQMPNIMPPPQPQNAPSGGGGSCCSSKSSQPPPMPQMSPNAMQAPPQPGFGQGFMPQYQTPIDIKMENMHHHQPFQFPGQTVFTYPAEYGSWQMPINPAIWQQVVSRPPTQQQHETPISATAPNGNNGTVGGNSHECGCGEGCQCVGCLAHPFNSQMLQYVQNAYSPNSSHGNSGSADSSANASPSANPLNLASPVEIPSGPELPPSHQTQPQPPPRPNANESDGSSNAPTPPNEGSPALSNEEELTALDYYFVHLPISALCGGALDMCPCDESCECVGCLVHNTAGFPQGDGGFS.

A DNA-binding region (copper-fist) is located at residues 1–41 (MPIINGQKMACGPCIRGHRSTKCNHYNERVMVPVRKPGRPL). 4 residues coordinate Zn(2+): cysteine 11, cysteine 14, cysteine 23, and histidine 25. Disordered regions lie at residues 70-115 (PAGT…ASRR), 233-352 (AFVD…PGFG), 407-428 (SRPP…NGNN), and 467-541 (SPNS…SPAL). The segment covering 92–103 (SPASRTSSNRVT) has biased composition (polar residues). Positions 104-115 (KSGSGSKSASRR) are enriched in low complexity. Residues 269–281 (GGSGGGGCCGGGK) are compositionally biased toward gly residues. Residues 287–314 (QAPPPVPAPLPTPPQQQMPNIMPPPQPQ) are compositionally biased toward pro residues. The segment covering 469–495 (NSSHGNSGSADSSANASPSANPLNLAS) has biased composition (low complexity). The span at 521–530 (ANESDGSSNA) shows a compositional bias: polar residues.

The protein resides in the nucleus. Functionally, copper-sensing transcription factor that regulates copper uptake by transactivation of Ctr3, a high affinity copper permease. Binds to the palindromic UAS sequence 5'-TGTTGCTCANNNNAGAGCAACT-3'. Also transactivates Sod2, a mitochondrial manganese superoxide dismutase through the palindromic UAS sequence 5'-GTTTGCTCA-3' with 352 bp separating the two inverted repeats. Loss of function indirectly leads to rearrangement of mitochondrial DNA associated with senescence in wild-type strains. The sequence is that of Protein GRISEA from Podospora anserina (Pleurage anserina).